Here is a 226-residue protein sequence, read N- to C-terminus: 3-isopropylmalate dehydratase small subunit (226 aa).

The tract at residues glutamate 204 to arginine 226 is disordered.

The protein belongs to the LeuD family. LeuD type 1 subfamily. In terms of assembly, heterodimer of LeuC and LeuD.

The enzyme catalyses (2R,3S)-3-isopropylmalate = (2S)-2-isopropylmalate. The protein operates within amino-acid biosynthesis; L-leucine biosynthesis; L-leucine from 3-methyl-2-oxobutanoate: step 2/4. In terms of biological role, catalyzes the isomerization between 2-isopropylmalate and 3-isopropylmalate, via the formation of 2-isopropylmaleate. In Bifidobacterium animalis subsp. lactis (strain AD011), this protein is 3-isopropylmalate dehydratase small subunit.